The following is a 428-amino-acid chain: 3-phosphoshikimate 1-carboxyvinyltransferase (428 aa).

Residues Lys21, Ser22, and Arg26 each contribute to the 3-phosphoshikimate site. Residue Lys21 participates in phosphoenolpyruvate binding. Phosphoenolpyruvate-binding residues include Gly91 and Arg119. Positions 164, 166, 313, and 340 each coordinate 3-phosphoshikimate. Gln166 is a phosphoenolpyruvate binding site. Asp313 functions as the Proton acceptor in the catalytic mechanism. Arg344 and Arg386 together coordinate phosphoenolpyruvate.

This sequence belongs to the EPSP synthase family. As to quaternary structure, monomer.

The protein resides in the cytoplasm. It catalyses the reaction 3-phosphoshikimate + phosphoenolpyruvate = 5-O-(1-carboxyvinyl)-3-phosphoshikimate + phosphate. Its pathway is metabolic intermediate biosynthesis; chorismate biosynthesis; chorismate from D-erythrose 4-phosphate and phosphoenolpyruvate: step 6/7. Functionally, catalyzes the transfer of the enolpyruvyl moiety of phosphoenolpyruvate (PEP) to the 5-hydroxyl of shikimate-3-phosphate (S3P) to produce enolpyruvyl shikimate-3-phosphate and inorganic phosphate. The chain is 3-phosphoshikimate 1-carboxyvinyltransferase from Campylobacter jejuni subsp. jejuni serotype O:2 (strain ATCC 700819 / NCTC 11168).